Here is a 424-residue protein sequence, read N- to C-terminus: Histidine--tRNA ligase (424 aa).

The protein belongs to the class-II aminoacyl-tRNA synthetase family. Homodimer.

It localises to the cytoplasm. It catalyses the reaction tRNA(His) + L-histidine + ATP = L-histidyl-tRNA(His) + AMP + diphosphate + H(+). The chain is Histidine--tRNA ligase from Salmonella paratyphi B (strain ATCC BAA-1250 / SPB7).